Consider the following 211-residue polypeptide: Small ribosomal subunit protein uS3 (211 aa).

A KH type-2 domain is found at 38-106; that stretch reads LRNFLKKRLY…EIYLNIQEVR (69 aa).

The protein belongs to the universal ribosomal protein uS3 family. Part of the 30S ribosomal subunit. Forms a tight complex with proteins S10 and S14.

Functionally, binds the lower part of the 30S subunit head. Binds mRNA in the 70S ribosome, positioning it for translation. This is Small ribosomal subunit protein uS3 from Geobacter sulfurreducens (strain ATCC 51573 / DSM 12127 / PCA).